A 122-amino-acid chain; its full sequence is Large ribosomal subunit protein uL14c (122 aa).

This sequence belongs to the universal ribosomal protein uL14 family. As to quaternary structure, part of the 50S ribosomal subunit.

The protein resides in the plastid. Its subcellular location is the chloroplast. In terms of biological role, binds to 23S rRNA. This chain is Large ribosomal subunit protein uL14c, found in Mesostigma viride (Green alga).